Here is a 286-residue protein sequence, read N- to C-terminus: MDSETRELRALEAEVAALQRECRMLQNAGEKASGAWKSFQKISQSDSEEWESLKDLRSQLEHLRSEHSFLSKLTGFNIRNYSKMEDIVNTEETEKDTKKVLQKHRLSGNCNMVTFQLEFEVLEMETKEKKSSIITDLSIIMEPTEYSELSEFASRAEEKRDLLMFFRSLHFFVEWCEYRENTFKHFKEKYPDTVYLLEGTCSHCMEIRSTRQPGFELVIVWKIQIDEEGMVFPKLDLLTKVPERALGLDKNRVIETAPLSFRSLLGVLGIEAALDSLIRLFSGDNN.

Positions 1–73 (MDSETRELRA…RSEHSFLSKL (73 aa)) form a coiled coil. Residue Ser-38 is modified to Phosphoserine.

Belongs to the CENP-P/CTF19 family. As to quaternary structure, component of the CENPA-CAD complex, composed of CENPI, CENPK, CENPL, CENPO, CENPP, CENPQ, CENPR and CENPS. The CENPA-CAD complex interacts with the CENPA-NAC complex, at least composed of CENPA, CENPC, CENPH, CENPM, CENPN, CENPT and CENPU.

It localises to the nucleus. Its subcellular location is the chromosome. The protein resides in the centromere. Its function is as follows. Component of the CENPA-CAD (nucleosome distal) complex, a complex recruited to centromeres which is involved in assembly of kinetochore proteins, mitotic progression and chromosome segregation. May be involved in incorporation of newly synthesized CENPA into centromeres via its interaction with the CENPA-NAC complex. The protein is Centromere protein P (Cenpp) of Mus musculus (Mouse).